A 96-amino-acid polypeptide reads, in one-letter code: Glutamyl-tRNA(Gln) amidotransferase subunit C (96 aa).

Belongs to the GatC family. In terms of assembly, heterotrimer of A, B and C subunits.

The catalysed reaction is L-glutamyl-tRNA(Gln) + L-glutamine + ATP + H2O = L-glutaminyl-tRNA(Gln) + L-glutamate + ADP + phosphate + H(+). It carries out the reaction L-aspartyl-tRNA(Asn) + L-glutamine + ATP + H2O = L-asparaginyl-tRNA(Asn) + L-glutamate + ADP + phosphate + 2 H(+). Functionally, allows the formation of correctly charged Asn-tRNA(Asn) or Gln-tRNA(Gln) through the transamidation of misacylated Asp-tRNA(Asn) or Glu-tRNA(Gln) in organisms which lack either or both of asparaginyl-tRNA or glutaminyl-tRNA synthetases. The reaction takes place in the presence of glutamine and ATP through an activated phospho-Asp-tRNA(Asn) or phospho-Glu-tRNA(Gln). In Deinococcus radiodurans (strain ATCC 13939 / DSM 20539 / JCM 16871 / CCUG 27074 / LMG 4051 / NBRC 15346 / NCIMB 9279 / VKM B-1422 / R1), this protein is Glutamyl-tRNA(Gln) amidotransferase subunit C.